We begin with the raw amino-acid sequence, 86 residues long: Large ribosomal subunit protein bL27 (86 aa).

Belongs to the bacterial ribosomal protein bL27 family.

In Koribacter versatilis (strain Ellin345), this protein is Large ribosomal subunit protein bL27.